The sequence spans 401 residues: uncharacterized protein (401 aa).

The next 7 membrane-spanning stretches (helical) occupy residues 44 to 64, 69 to 89, 99 to 119, 130 to 150, 201 to 221, 246 to 266, and 286 to 306; these read LKYTIVYILALVNAFFLLVFI, LYSFGISSLTQGFARLLFVLL, LVFNIFYWLFYVIVNIPLIIF, ILSTHYVVASNVFGFIFSIIP, FIYAGIYGFVNGTSLAILYIL, ILFYVNTFILIIAILMGSFVA, and LFFSPNLIATFFSVLFTGTVV.

The protein localises to the cell membrane. This is an uncharacterized protein from Mycoplasma pneumoniae (strain ATCC 29342 / M129 / Subtype 1) (Mycoplasmoides pneumoniae).